We begin with the raw amino-acid sequence, 146 residues long: Ribosome-binding factor A (146 aa).

The interval 127–146 (EFAGEADPYKKPEDDEAAES) is disordered.

It belongs to the RbfA family. As to quaternary structure, monomer. Binds 30S ribosomal subunits, but not 50S ribosomal subunits or 70S ribosomes.

It is found in the cytoplasm. Functionally, one of several proteins that assist in the late maturation steps of the functional core of the 30S ribosomal subunit. Associates with free 30S ribosomal subunits (but not with 30S subunits that are part of 70S ribosomes or polysomes). Required for efficient processing of 16S rRNA. May interact with the 5'-terminal helix region of 16S rRNA. This is Ribosome-binding factor A from Renibacterium salmoninarum (strain ATCC 33209 / DSM 20767 / JCM 11484 / NBRC 15589 / NCIMB 2235).